Reading from the N-terminus, the 360-residue chain is MLVWLAEHLVTFYSGFNVFSYLTFRAIVSLLTALFISLWMGPRMIARLQEMSFGQVVRNDGPESHFSKRGTPTMGGIMILTSITVSVLLWAYPSNPYVWCVLFVLVGYGIVGFVDDYRKVVRKDTKGLIARWKYFWQSAIALVVAFVMYMIGKDTPATELVVPFFKDVMPQLGLLYLLLAYFVIVGTSNAVNLTDGLDGLAIMPTVFVAAGFALVAWATGNVKFAEYLHIPYLRHAGELVIVCTAIVGAGLGFLWFNTYPAQVFMGDVGSLALGGALGTIAVLLRQEFLLVIMGGVFVVETLSVILQVGSFKLRGQRIFRMAPIHHHYELKGWPEPRVIVRFWIISLMLVLIGLATLKVR.

Helical transmembrane passes span 26–46, 72–92, 94–114, 132–152, 168–188, 199–219, 236–256, 263–283, 288–308, and 338–358; these read AIVS…RMIA, PTMG…LWAY, SNPY…VGFV, WKYF…YMIG, VMPQ…VGTS, GLAI…AWAT, AGEL…FLWF, VFMG…IAVL, FLLV…ILQV, and VIVR…ATLK.

This sequence belongs to the glycosyltransferase 4 family. MraY subfamily. The cofactor is Mg(2+).

It is found in the cell inner membrane. The enzyme catalyses UDP-N-acetyl-alpha-D-muramoyl-L-alanyl-gamma-D-glutamyl-meso-2,6-diaminopimeloyl-D-alanyl-D-alanine + di-trans,octa-cis-undecaprenyl phosphate = di-trans,octa-cis-undecaprenyl diphospho-N-acetyl-alpha-D-muramoyl-L-alanyl-D-glutamyl-meso-2,6-diaminopimeloyl-D-alanyl-D-alanine + UMP. It participates in cell wall biogenesis; peptidoglycan biosynthesis. Its function is as follows. Catalyzes the initial step of the lipid cycle reactions in the biosynthesis of the cell wall peptidoglycan: transfers peptidoglycan precursor phospho-MurNAc-pentapeptide from UDP-MurNAc-pentapeptide onto the lipid carrier undecaprenyl phosphate, yielding undecaprenyl-pyrophosphoryl-MurNAc-pentapeptide, known as lipid I. This is Phospho-N-acetylmuramoyl-pentapeptide-transferase from Erwinia tasmaniensis (strain DSM 17950 / CFBP 7177 / CIP 109463 / NCPPB 4357 / Et1/99).